The sequence spans 165 residues: Large ribosomal subunit protein uL10 (165 aa).

It belongs to the universal ribosomal protein uL10 family. In terms of assembly, part of the ribosomal stalk of the 50S ribosomal subunit. The N-terminus interacts with L11 and the large rRNA to form the base of the stalk. The C-terminus forms an elongated spine to which L12 dimers bind in a sequential fashion forming a multimeric L10(L12)X complex.

In terms of biological role, forms part of the ribosomal stalk, playing a central role in the interaction of the ribosome with GTP-bound translation factors. The polypeptide is Large ribosomal subunit protein uL10 (Shewanella pealeana (strain ATCC 700345 / ANG-SQ1)).